The primary structure comprises 903 residues: Protein translocase subunit SecA (903 aa).

ATP is bound by residues Gln87, 105–109 (GEGKT), and Asp494. The segment at 861–883 (SGSQGAAPRQPVRAEGKKVGRND) is disordered. The segment covering 872-881 (VRAEGKKVGR) has biased composition (basic and acidic residues). Positions 885, 887, 896, and 897 each coordinate Zn(2+).

It belongs to the SecA family. As to quaternary structure, monomer and homodimer. Part of the essential Sec protein translocation apparatus which comprises SecA, SecYEG and auxiliary proteins SecDF. Other proteins may also be involved. Zn(2+) is required as a cofactor.

The protein localises to the cell membrane. It localises to the cytoplasm. The enzyme catalyses ATP + H2O + cellular proteinSide 1 = ADP + phosphate + cellular proteinSide 2.. Part of the Sec protein translocase complex. Interacts with the SecYEG preprotein conducting channel. Has a central role in coupling the hydrolysis of ATP to the transfer of proteins into and across the cell membrane, serving as an ATP-driven molecular motor driving the stepwise translocation of polypeptide chains across the membrane. The polypeptide is Protein translocase subunit SecA (Symbiobacterium thermophilum (strain DSM 24528 / JCM 14929 / IAM 14863 / T)).